A 287-amino-acid polypeptide reads, in one-letter code: MIRMRTPSTLPFTKMHGAGNDFVVLDLRDGPDPSPELCRALADRHKGVGCDLVLGIREPRSARAVAAFDIWTADGSRSAQCGNGARCVAAWAVRAGLARGPRFALDSPSGTHEVDVLDADTFRVALAVPRFAPESIPLFGHDGEQDLYEADLGDGTRVRFAAVSMGNPHAVIEVDDTATAPVARVGRAVQASGLFLPTVNVGFARVESRDRVHLRVHEYGAGETLACGSGACAAAAVLMRRGRVDRNVSVVLPGGELRISWPDDAADVLMTGPAAFVYEGTFLHASV.

Asparagine 20 is a binding site for substrate. The active-site Proton donor is the cysteine 81. Residues 82 to 83 (GN), asparagine 167, asparagine 200, and 218 to 219 (EY) contribute to the substrate site. The active-site Proton acceptor is the cysteine 227. Residue 228-229 (GS) participates in substrate binding.

This sequence belongs to the diaminopimelate epimerase family. In terms of assembly, monomer.

It is found in the cytoplasm. It carries out the reaction O-ureido-L-serine = O-ureido-D-serine. With respect to regulation, inhibited by thiol-inactivating reagents such as iodoacetamide and Hg(2+) ions. Its function is as follows. Involved in the biosynthesis of the antibiotic D-cycloserine (DCS), a cyclic structural analog of D-alanine, used as an antitubercular agent. Catalyzes the stereoinversion of O-ureido-L-serine to O-ureido-D-serine. This Streptomyces lavendulae protein is O-ureido-serine racemase.